The primary structure comprises 1009 residues: MAGNIVKWWKHKILGGYKQFSVQECTTDSEELMYHQVRASSSCSAPPDLLLVSERDNNIQLRSPVVNIITTPPGNASGSASNKQQQLQQQQGHQHHHQAMPMPHTHASRHHHHQQQQQQQLPQDMSSSGSHTKHLRISSSSGGKHGKYANMQQQQQQQQTAAAATGVDEDVVDAAAAAAAAPHGAHQQMHSRHLHHHKEERIRLEEFTCDVSVEGGKSSQPLQFSFTFYDLDGHHGKITKDDIVGIVYTIYESIGKSVVVPHCGSKTINVRLTVSPEGKSKSAQQPAMAMGVVPASVPLPAAALGNNNNSNNNNNNKLKKLPTGLAAMSKQMNGGNGGGGALTTSAGTRRQHRYRPRKLIKSDDEDDDSNSEKEKERERERERESHAADQQPSGSGSKGAGSKSHHHHHHHGRYQKNQSGAKLEHQQQQQQQLCCADTPDNTYENMLNLKQDTQAAGNEATVPDCPSSHRQLHHQRQQDIYMKQATQRVKMLRRARKQKYQDHCLETRQRSLSVGNDSGNWQNRHLQQSLQQQPQAAHKSASVSPPPLAGELMLDGVQLRQPRPPHQSHHQQLQQQQQQRKSAECWKSALNRNDLISIIRESMEKNRLCFQLNGKPQANVSPIRQPAAQQQQQQQRQRSSTGSKIPTLIANHSPAAPQSPLSCSPPPCTLSLSLSSSNHPAAATCSIPVPAQAQAQGQAQAQAQVPAPPAVIEVGGGHHQHDHPQPHIPIYHQQLAINPAVLAAQHSHNSAHNKLNLCGYDSFLHATICGGGSAAHSPPPTPSNVATVQPIPKKSHNQKSLLQGYQRLEQQQQQRSSKDYKNYGNLIYAKLSEQLQQKEREQRRHRHKQQQQQHHHQQQQQQQQQQNQQQQQQQQPLKPKEESLAEQRPPTSSSSSAGSKIFGDALECAHLLASEEEDLPASPPLTHSTPSKVVSTDTLIDLNDDVGEAVAEAVTESGGKQQQQQALEADEGQEQEVELDTSASSSMIHRYVHEHIHHHYHHFKEQQDV.

2 stretches are compositionally biased toward polar residues: residues 68-83 (IITTPPGNASGSASNK) and 121-130 (LPQDMSSSGS). The segment at 68–166 (IITTPPGNAS…QQQTAAAATG (99 aa)) is disordered. The segment covering 152-166 (QQQQQQQQTAAAATG) has biased composition (low complexity). The interval 206–282 (EFTCDVSVEG…TVSPEGKSKS (77 aa)) is interaction with dsh. The EF-hand domain occupies 217–253 (KSSQPLQFSFTFYDLDGHHGKITKDDIVGIVYTIYES). Disordered regions lie at residues 328–433 (MSKQ…QQQL), 456–479 (AGNEATVPDCPSSHRQLHHQRQQD), and 515–580 (GNDS…QQQR). Residues 349 to 359 (RRQHRYRPRKL) are compositionally biased toward basic residues. Basic and acidic residues predominate over residues 370 to 387 (NSEKEKERERERERESHA). The segment covering 403-414 (KSHHHHHHHGRY) has biased composition (basic residues). The span at 515–525 (GNDSGNWQNRH) shows a compositional bias: polar residues. Low complexity-rich tracts occupy residues 526-535 (LQQSLQQQPQ) and 570-580 (HQQLQQQQQQR). Residues 584–613 (ECWKSALNRNDLISIIRESMEKNRLCFQLN) form a required for nuclear localization and inhibition of Wnt signaling region. Disordered stretches follow at residues 619 to 662 (NVSP…SPLS), 773 to 799 (SAAHSPPPTPSNVATVQPIPKKSHNQK), 835 to 899 (LQQK…SAGS), and 955 to 982 (TESGGKQQQQQALEADEGQEQEVELDTS). Low complexity-rich tracts occupy residues 624-638 (RQPAAQQQQQQQRQR) and 653-662 (SPAAPQSPLS). Over residues 843–857 (RRHRHKQQQQQHHHQ) the composition is skewed to basic residues. Residues 858–875 (QQQQQQQQQNQQQQQQQQ) are compositionally biased toward low complexity. Positions 968–979 (EADEGQEQEVEL) are enriched in acidic residues.

Belongs to the NKD family. In terms of assembly, interacts with dsh.

The protein resides in the cell membrane. Its subcellular location is the cytoplasm. It localises to the nucleus. Functionally, cell autonomous antagonist of the canonical Wnt signaling pathway. May activate a second Wnt signaling pathway that controls planar cell polarity. Required for neuroblast specification. In Drosophila pseudoobscura pseudoobscura (Fruit fly), this protein is Protein naked cuticle.